Reading from the N-terminus, the 819-residue chain is Zinc finger protein 27 (819 aa).

Residues 1-75 form the KRAB domain; that stretch reads MDVTIDFSRE…KTLGAESCHD (75 aa). The interval 93-123 is disordered; that stretch reads PKRPRHWDPPEDEPKHSSDLQTHDESNGLKR. Positions 98–120 are enriched in basic and acidic residues; sequence HWDPPEDEPKHSSDLQTHDESNG. C2H2-type zinc fingers lie at residues 205-227, 233-255, 261-283, 289-311, 317-339, 345-367, 401-423, 429-451, 457-479, 485-507, 513-535, 541-563, 569-591, 597-619, 625-647, 653-675, 681-703, 709-731, 737-759, 765-787, and 793-815; these read YVCV…QKTH, YKCG…RRIH, YDCS…QKIH, HGCV…QKIH, YVCI…RRIH, YACD…QRIH, SICA…QRTH, YQCG…RRIH, YVCV…QVIH, YQCG…KRIH, YVCS…QKTH, YVCA…QRIH, YGCS…EKIH, YGCR…QKIH, HVCA…QRIH, YGCT…RPIH, YVCA…QKTH, YACS…HRIH, YDCG…QRIH, YRCA…QTTH, and YKCV…ENVH.

The protein belongs to the krueppel C2H2-type zinc-finger protein family.

The protein resides in the nucleus. Its function is as follows. May be involved in transcriptional regulation. This is Zinc finger protein 27 (Zfp27) from Mus musculus (Mouse).